We begin with the raw amino-acid sequence, 873 residues long: Zinc fingers and homeoboxes protein 1 (873 aa).

The interval 1-63 is disordered; the sequence is MASRRKSTTP…ESVDSDNQQN (63 aa). A compositionally biased stretch (acidic residues) spans 18 to 30; that stretch reads QDPDLELISDLDE. Thr36 is modified (phosphothreonine). Residues Ser45, Ser47, and Ser48 each carry the phosphoserine modification. 2 C2H2-type zinc fingers span residues 70–93 and 102–125; these read YECK…DSEH and YVCV…LKYH. Lys159 participates in a covalent cross-link: Glycyl lysine isopeptide (Lys-Gly) (interchain with G-Cter in SUMO2). Residue Ser202 is modified to Phosphoserine. Residues 202-236 are disordered; the sequence is SVEDVPEEKENEIKPDREEIVENPSSSASESNTST. Over residues 212-221 the composition is skewed to basic and acidic residues; sequence NEIKPDREEI. The segment covering 223 to 236 has biased composition (low complexity); that stretch reads ENPSSSASESNTST. The required for dimerization stretch occupies residues 272–432; sequence NSNLIPKVLI…QNNVQKSQVP (161 aa). Positions 272 to 564 are required for interaction with NFYA; that stretch reads NSNLIPKVLI…AQPKQSWNPF (293 aa). The homeobox 1 DNA-binding region spans 284 to 346; that stretch reads NSIPTYNAAL…LKHGVSWTPE (63 aa). Residues Lys441, Lys454, Lys485, and Lys629 each participate in a glycyl lysine isopeptide (Lys-Gly) (interchain with G-Cter in SUMO2) cross-link. 2 consecutive DNA-binding regions (homeobox) follow at residues 464–526 and 569–630; these read SFGI…KSNQ and PQKF…EEKM. 2 disordered regions span residues 626–667 and 732–769; these read KEEK…ICKK and SSMN…INNW. Ser648 bears the Phosphoserine mark. Positions 660–722 form a DNA-binding region, homeobox 4; it reads STGKICKKTP…YAWKNGNLKW (63 aa). A required for nuclear localization region spans residues 734 to 768; it reads MNGLSSLRKRGRGRPKGRGRGRPRGRPRGSKRINN. Over residues 740 to 764 the composition is skewed to basic residues; the sequence is LRKRGRGRPKGRGRGRPRGRPRGSK. A Phosphoserine modification is found at Ser774. Residues 777–832 constitute a DNA-binding region (homeobox 5); it reads KFKTGTAILKDYYLKHKFLNEQDLDELVNKSHMGYEQVREWFAERQRRSELGIELF. The interval 829–873 is disordered; sequence IELFEENEEEDEVIDDQEEDEEETDDSDTWEPPRHVKRKLSKSDD. The segment covering 831–857 has biased composition (acidic residues); the sequence is LFEENEEEDEVIDDQEEDEEETDDSDT. The interval 831 to 873 is required for repressor activity; the sequence is LFEENEEEDEVIDDQEEDEEETDDSDTWEPPRHVKRKLSKSDD. Positions 863 to 873 are enriched in basic residues; that stretch reads HVKRKLSKSDD.

Belongs to the ZHX family. As to quaternary structure, forms homodimers. Also forms heterodimers with ZHX3 which is a prerequisite for repressor activity and with ZHX2. Interacts with NFYA. Interacts with ATF7IP.

It is found in the nucleus. Its function is as follows. Acts as a transcriptional repressor. This Gorilla gorilla gorilla (Western lowland gorilla) protein is Zinc fingers and homeoboxes protein 1 (ZHX1).